Reading from the N-terminus, the 319-residue chain is Peroxidase 62 (319 aa).

Residues 1 to 22 (MGLVRSFALVIVFLSCLIAVYG) form the signal peptide. Cystine bridges form between cysteine 34–cysteine 110, cysteine 67–cysteine 72, cysteine 116–cysteine 315, and cysteine 195–cysteine 226. Histidine 65 functions as the Proton acceptor in the catalytic mechanism. 5 residues coordinate Ca(2+): aspartate 66, valine 69, glycine 71, aspartate 73, and serine 75. Position 157 (proline 157) interacts with substrate. Heme b is bound at residue histidine 188. Threonine 189 provides a ligand contact to Ca(2+). Asparagine 204 carries N-linked (GlcNAc...) asparagine glycosylation. The Ca(2+) site is built by aspartate 239, serine 242, and aspartate 247. N-linked (GlcNAc...) asparagine glycosylation is present at asparagine 253.

The protein belongs to the peroxidase family. Classical plant (class III) peroxidase subfamily. Heme b is required as a cofactor. The cofactor is Ca(2+). Mainly expressed in roots.

The protein resides in the secreted. It catalyses the reaction 2 a phenolic donor + H2O2 = 2 a phenolic radical donor + 2 H2O. Its function is as follows. Removal of H(2)O(2), oxidation of toxic reductants, biosynthesis and degradation of lignin, suberization, auxin catabolism, response to environmental stresses such as wounding, pathogen attack and oxidative stress. These functions might be dependent on each isozyme/isoform in each plant tissue. The polypeptide is Peroxidase 62 (PER62) (Arabidopsis thaliana (Mouse-ear cress)).